The following is a 198-amino-acid chain: RxLR effector protein Htp1 (198 aa).

The N-terminal stretch at 1–23 (MRIHHPLTLAALCVVLHESLGAA) is a signal peptide. A RxLR motif is present at residues 46-49 (RHLR). Disordered stretches follow at residues 48–101 (LRSD…TPMK) and 115–198 (TKNA…PTFD). An N-linked (GlcNAc...) asparagine glycan is attached at Asn-70. Polar residues predominate over residues 70–91 (NNSQEQATTGNSVETNQVPSTE). The span at 126-137 (DDDDSDFSDDDV) shows a compositional bias: acidic residues. Residues 173–191 (APTNAPTGTDAPTDAPTDA) show a composition bias toward low complexity.

It belongs to the RxLR effector family. Interacts with the effector Htp3 within the host cells.

The protein localises to the secreted. The protein resides in the host cell. In terms of biological role, effector involved in the disease saprolegniosis in salmonids and other freshwater fish, resulting in considerable economic losses in aquaculture. Within the host fish cells, Htp1 is involved in the uptake of the S.parasitica effector Htp3 at a neutral pH (pH 7.5) and its release from vesicles into host cytosol where it degrades nucleic acids. The chain is RxLR effector protein Htp1 from Saprolegnia parasitica (strain CBS 223.65).